We begin with the raw amino-acid sequence, 498 residues long: Guanosine-5'-triphosphate,3'-diphosphate pyrophosphatase (498 aa).

The protein belongs to the GppA/Ppx family. GppA subfamily.

It catalyses the reaction guanosine 3'-diphosphate 5'-triphosphate + H2O = guanosine 3',5'-bis(diphosphate) + phosphate + H(+). It functions in the pathway purine metabolism; ppGpp biosynthesis; ppGpp from GTP: step 2/2. Its function is as follows. Catalyzes the conversion of pppGpp to ppGpp. Guanosine pentaphosphate (pppGpp) is a cytoplasmic signaling molecule which together with ppGpp controls the 'stringent response', an adaptive process that allows bacteria to respond to amino acid starvation, resulting in the coordinated regulation of numerous cellular activities. The sequence is that of Guanosine-5'-triphosphate,3'-diphosphate pyrophosphatase from Pectobacterium carotovorum subsp. carotovorum (strain PC1).